Reading from the N-terminus, the 110-residue chain is Large ribosomal subunit protein uL22 (110 aa).

Belongs to the universal ribosomal protein uL22 family. In terms of assembly, part of the 50S ribosomal subunit.

This protein binds specifically to 23S rRNA; its binding is stimulated by other ribosomal proteins, e.g. L4, L17, and L20. It is important during the early stages of 50S assembly. It makes multiple contacts with different domains of the 23S rRNA in the assembled 50S subunit and ribosome. Functionally, the globular domain of the protein is located near the polypeptide exit tunnel on the outside of the subunit, while an extended beta-hairpin is found that lines the wall of the exit tunnel in the center of the 70S ribosome. This Salmonella arizonae (strain ATCC BAA-731 / CDC346-86 / RSK2980) protein is Large ribosomal subunit protein uL22.